We begin with the raw amino-acid sequence, 396 residues long: uncharacterized protein (396 aa).

N6-(pyridoxal phosphate)lysine is present on lysine 219.

This sequence belongs to the class-V pyridoxal-phosphate-dependent aminotransferase family. Pyridoxal 5'-phosphate serves as cofactor.

The protein localises to the cytoplasm. It localises to the nucleus. This is an uncharacterized protein from Schizosaccharomyces pombe (strain 972 / ATCC 24843) (Fission yeast).